A 455-amino-acid chain; its full sequence is Nucleoside-triphosphatase (455 aa).

The active-site Proton acceptor is the Glu-168.

Belongs to the GDA1/CD39 NTPase family.

Its subcellular location is the nucleus. It catalyses the reaction a ribonucleoside 5'-triphosphate + H2O = a ribonucleoside 5'-diphosphate + phosphate + H(+). Might be involved in RNA transport out of nuclei. This chain is Nucleoside-triphosphatase, found in Pisum sativum (Garden pea).